The sequence spans 319 residues: Acetyl-coenzyme A carboxylase carboxyl transferase subunit alpha (319 aa).

Residues 32-293 (NVDAEVRALR…KAVLLNELDA (262 aa)) enclose the CoA carboxyltransferase C-terminal domain.

This sequence belongs to the AccA family. As to quaternary structure, acetyl-CoA carboxylase is a heterohexamer composed of biotin carboxyl carrier protein (AccB), biotin carboxylase (AccC) and two subunits each of ACCase subunit alpha (AccA) and ACCase subunit beta (AccD).

Its subcellular location is the cytoplasm. It catalyses the reaction N(6)-carboxybiotinyl-L-lysyl-[protein] + acetyl-CoA = N(6)-biotinyl-L-lysyl-[protein] + malonyl-CoA. It functions in the pathway lipid metabolism; malonyl-CoA biosynthesis; malonyl-CoA from acetyl-CoA: step 1/1. Functionally, component of the acetyl coenzyme A carboxylase (ACC) complex. First, biotin carboxylase catalyzes the carboxylation of biotin on its carrier protein (BCCP) and then the CO(2) group is transferred by the carboxyltransferase to acetyl-CoA to form malonyl-CoA. The sequence is that of Acetyl-coenzyme A carboxylase carboxyl transferase subunit alpha from Xanthomonas campestris pv. campestris (strain B100).